Reading from the N-terminus, the 176-residue chain is Tumor necrosis factor receptor superfamily member 23 (176 aa).

Positions 1-29 are cleaved as a signal peptide; it reads MVTFSHVSSLSHWFLLLLLLNLFLPVIFA. TNFR-Cys repeat units lie at residues 37-72, 74-114, and 115-155; these read NCPD…QGQC, KCHP…DRKC, and ECQI…NTVC. 9 disulfide bridges follow: Cys-38–Cys-49, Cys-50–Cys-63, Cys-53–Cys-72, Cys-75–Cys-90, Cys-93–Cys-106, Cys-96–Cys-114, Cys-116–Cys-131, Cys-134–Cys-147, and Cys-137–Cys-155. Asn-148 carries an N-linked (GlcNAc...) asparagine glycan. A lipid anchor (GPI-anchor amidated cysteine) is attached at Cys-155. A propeptide spans 156–176 (removed in mature form); that stretch reads SSSVSNPRNWLFLLMLIVFCI.

As to expression, ubiquitous.

Its subcellular location is the cell membrane. Functionally, receptor for the cytotoxic ligand TRAIL. Lacks a cytoplasmic death domain and hence is not capable of inducing apoptosis. May protect cells against TRAIL mediated apoptosis through ligand competition. Cannot induce the NF-kappa-B pathway. This Mus musculus (Mouse) protein is Tumor necrosis factor receptor superfamily member 23 (Tnfrsf23).